The sequence spans 260 residues: Methyl-coenzyme M reductase subunit gamma (260 aa).

Arg-123 is a coenzyme M binding site.

It belongs to the methyl-coenzyme M reductase gamma subunit family. As to quaternary structure, MCR is a hexamer of two alpha, two beta, and two gamma chains, forming a dimer of heterotrimers. The cofactor is coenzyme F430.

It localises to the cytoplasm. It carries out the reaction coenzyme B + methyl-coenzyme M = methane + coenzyme M-coenzyme B heterodisulfide. Its pathway is one-carbon metabolism; methyl-coenzyme M reduction; methane from methyl-coenzyme M: step 1/1. Functionally, component of the methyl-coenzyme M reductase (MCR) I that catalyzes the reductive cleavage of methyl-coenzyme M (CoM-S-CH3 or 2-(methylthio)ethanesulfonate) using coenzyme B (CoB or 7-mercaptoheptanoylthreonine phosphate) as reductant which results in the production of methane and the mixed heterodisulfide of CoB and CoM (CoM-S-S-CoB). This is the final step in methanogenesis. In Methanococcus vannielii, this protein is Methyl-coenzyme M reductase subunit gamma (mcrG).